We begin with the raw amino-acid sequence, 357 residues long: Serine protease 1 (357 aa).

The signal sequence occupies residues 1 to 29; that stretch reads MRRTTRARTGLSALLLAASLGLGAAPAGA. A propeptide spanning residues 30 to 170 is cleaved from the precursor; the sequence is DAPQRPAPTP…TRVPGVFQRE (141 aa). Cys184 and Cys204 are joined by a disulfide. Active-site charge relay system residues include His203, Asp232, and Ser313. Cys307 and Cys333 are joined by a disulfide.

Belongs to the peptidase S1 family.

It is found in the secreted. Its function is as follows. Serine protease that preferentially cleaves peptide bonds on the C-terminal side of aspartate and glutamate with a 10-fold higher reactivity for a glutamyl bond than an aspartyl bond. The sequence is that of Serine protease 1 from Streptomyces fradiae (Streptomyces roseoflavus).